An 880-amino-acid polypeptide reads, in one-letter code: Interference hedgehog (880 aa).

The N-terminal stretch at 1–20 (MTLLTSSLLLFSLLTSRLEA) is a signal peptide. The Extracellular portion of the chain corresponds to 21 to 703 (IPVLEKSPAH…ETFNMSPMLT (683 aa)). Ig-like C2-type domains lie at 45–142 (PGVR…TARL), 155–232 (PESP…ERIQ), 252–340 (PHLL…YIKV), and 346–432 (PQIV…LQVN). 4 cysteine pairs are disulfide-bonded: C68–C126, C173–C220, C276–C324, and C367–C414. Residues N102 and N209 are each glycosylated (N-linked (GlcNAc...) asparagine). The interval 429-467 (LQVNPKQIQEPRESGGTHRPNPNQGSKHKQMYPPTPPNV) is disordered. 2 consecutive Fibronectin type-III domains span residues 461-567 (PPTP…LQPG) and 575-670 (VPEL…TQRP). An N-linked (GlcNAc...) asparagine glycan is attached at N466. Heparin is bound by residues R497, K501, K503, and R541. Residue N557 is glycosylated (N-linked (GlcNAc...) asparagine). A disordered region spans residues 662 to 692 (LKQGRTQRPKTSTTEEPTLQMGDRDTTTPSH). The span at 665 to 678 (GRTQRPKTSTTEEP) shows a compositional bias: polar residues. A glycan (N-linked (GlcNAc...) asparagine) is linked at N693. A helical transmembrane segment spans residues 704–724 (GTIGGGAVLILLLISTCLCVC). The Cytoplasmic portion of the chain corresponds to 725–880 (RRRNSRSRGN…SSGSLNSVGV (156 aa)). Disordered stretches follow at residues 728–762 (NSRS…QRQR) and 775–880 (QQQQ…SVGV). Composition is skewed to low complexity over residues 823–837 (RAGG…NNNN) and 864–880 (SSRS…SVGV).

This sequence belongs to the immunoglobulin superfamily. IHOG family. As to quaternary structure, homodimer. Heterotetramer; 2 iHog chains bind 2 hh chains when facilitated by heparin, heparin is required to promote high-affinity interactions between hh and iHog.

It is found in the membrane. Its function is as follows. Mediates response to the active Hedgehog (Hh) protein signal in embryos, functioning upstream or at the level of patched (ptc). In Drosophila simulans (Fruit fly), this protein is Interference hedgehog.